A 117-amino-acid chain; its full sequence is Large ribosomal subunit protein bL20 (117 aa).

It belongs to the bacterial ribosomal protein bL20 family.

Functionally, binds directly to 23S ribosomal RNA and is necessary for the in vitro assembly process of the 50S ribosomal subunit. It is not involved in the protein synthesizing functions of that subunit. This is Large ribosomal subunit protein bL20 from Rippkaea orientalis (strain PCC 8801 / RF-1) (Cyanothece sp. (strain PCC 8801)).